Reading from the N-terminus, the 364-residue chain is MANKTVLFNKHLESNAKMVDFHGWDMPLNYGSQIEEHHAVRQDAGMFDVSHMTVVDVTGTDACAFLRKLLANDVAKLKVPGKALYGGMLDDNAGIIDDLITYYLTDTFYRVVVNSATREKDLAWIAKQSQGFDVTVTERPELAMIAVQGPNAKAKAAAVFSSEQNAAIEGMKPFFGKQAGSLFIATTGYTGEAGYEIIVPETEAEALWQALLDQGVKPCGLGARDTLRLEAGMNLYGLDMDETINPLAANMGWTIAWEPTDRDFIGRKALEALRDAGTDKLVGLVMEEKGVLRHDMPVFFTDAAGVEQQGVITSGTFSPTLGYSIAMARVPSSIGDTAEVEMRKKRVAVRVVAPNFVRNGKQAF.

It belongs to the GcvT family. In terms of assembly, the glycine cleavage system is composed of four proteins: P, T, L and H.

The catalysed reaction is N(6)-[(R)-S(8)-aminomethyldihydrolipoyl]-L-lysyl-[protein] + (6S)-5,6,7,8-tetrahydrofolate = N(6)-[(R)-dihydrolipoyl]-L-lysyl-[protein] + (6R)-5,10-methylene-5,6,7,8-tetrahydrofolate + NH4(+). The glycine cleavage system catalyzes the degradation of glycine. This chain is Aminomethyltransferase, found in Shewanella oneidensis (strain ATCC 700550 / JCM 31522 / CIP 106686 / LMG 19005 / NCIMB 14063 / MR-1).